Consider the following 262-residue polypeptide: Thiazole synthase (262 aa).

Lysine 95 functions as the Schiff-base intermediate with DXP in the catalytic mechanism. Residues glycine 156, 182-183, and 204-205 contribute to the 1-deoxy-D-xylulose 5-phosphate site; these read AG and NT.

The protein belongs to the ThiG family. In terms of assembly, homotetramer. Forms heterodimers with either ThiH or ThiS.

It localises to the cytoplasm. It carries out the reaction [ThiS sulfur-carrier protein]-C-terminal-Gly-aminoethanethioate + 2-iminoacetate + 1-deoxy-D-xylulose 5-phosphate = [ThiS sulfur-carrier protein]-C-terminal Gly-Gly + 2-[(2R,5Z)-2-carboxy-4-methylthiazol-5(2H)-ylidene]ethyl phosphate + 2 H2O + H(+). It functions in the pathway cofactor biosynthesis; thiamine diphosphate biosynthesis. Its function is as follows. Catalyzes the rearrangement of 1-deoxy-D-xylulose 5-phosphate (DXP) to produce the thiazole phosphate moiety of thiamine. Sulfur is provided by the thiocarboxylate moiety of the carrier protein ThiS. In vitro, sulfur can be provided by H(2)S. In Yersinia enterocolitica serotype O:8 / biotype 1B (strain NCTC 13174 / 8081), this protein is Thiazole synthase.